A 794-amino-acid chain; its full sequence is MNINLDSAKDVLCKNILIYGYCKFQDKGCAFSHNKQLTTPQQQQQQQQIEEEEESIRQGGTAVGVPGSQRNKGAGAGTGAKAIQSNGMVNSQETQSKRRFDANSPLFQPAVNNAKGTAVTNLASKFSNLSPRIRDAPVFKPENESPISQELNSKLATSGLGSIYSSKKFNASTPSFTPTGFDFSVAAQVGNNPGSTAPANLQLQQKQPQQPQQPQQPQQHQQQQQLGLQNLNQTQLGRNLNVLLQPQISQPFIPANAIPPSSAAGQLQLHMQVQQPQAQTQPPSHLTPSSIMSSAPMSAGFYTSALPIPQGGGMRNQPPSASMYPLQYHLYAPAPPPRLAVPTKEYETDSQQLFLPNELRESLHRKNEASLQTMQHLSLPDHVNSYHSLVPIDKSYDSSSKIWPGKSTVLFKCNSNFDGNLYALRKIEPCNEIVDETPFRNIRKWKSLHNNANIVALRDAFTTMAFSNTFSSPNSSAGNEVVGANGASLCFVYDYYPNLTTLLERHKKGIRVVPITEDLLWSYLTQLVNAVAAIHAKKLALRSTIDLSKIINTTEDRIKLSGCGISEVLSFSASNANASSGEEDEEREFARLRALDIVDLGKVLLELSALLLPMNLRASLTSTLLKNLANSTKLSQNFLDVLQVLTDPSLLQEPYSFDMDQFILQYISSHFMTLMNKLQNSHDWVELQLSTELENARLFRLMTKINFIISEMPTYDLNSQNRLKIIKVFQENLFNSVGPNGKKVVNMDRVLVNLNKLDCGIDEKTLLISDKECMIITFKEIKELIDTQFRLLRG.

The C3H1-type zinc-finger motif lies at 7–36 (SAKDVLCKNILIYGYCKFQDKGCAFSHNKQ). 2 disordered regions span residues 40–97 (PQQQ…TQSK) and 187–226 (AQVGNNPGSTAPANLQLQQKQPQQPQQPQQPQQHQQQQQL). Composition is skewed to polar residues over residues 83-94 (IQSNGMVNSQET) and 189-199 (VGNNPGSTAPA). A compositionally biased stretch (low complexity) spans 200–226 (NLQLQQKQPQQPQQPQQPQQHQQQQQL). Residues 372–668 (QTMQHLSLPD…MDQFILQYIS (297 aa)) are pseudokinase domain. Residues arginine 425 and 494–501 (DYYPNLTT) each bind ATP. Residues 669 to 707 (SHFMTLMNKLQNSHDWVELQLSTELENARLFRLMTKINF) are a coiled coil. The segment at 708-794 (IISEMPTYDL…IDTQFRLLRG (87 aa)) is knob domain.

Belongs to the protein kinase superfamily. PAN3 family. In terms of assembly, homodimer. Forms a heterotrimer with a catalytic subunit PAN2 to form the poly(A)-nuclease (PAN) deadenylation complex. Interacts (via PAM-2 motif) with poly(A)-binding protein PAB1 (via PABC domain), conferring substrate specificity of the enzyme complex.

The protein localises to the cytoplasm. In terms of biological role, regulatory subunit of the poly(A)-nuclease (PAN) deadenylation complex, one of two cytoplasmic mRNA deadenylases involved in mRNA turnover. PAN specifically shortens poly(A) tails of RNA and the activity is stimulated by poly(A)-binding protein PAB1. PAN deadenylation is followed by rapid degradation of the shortened mRNA tails by the CCR4-NOT complex. Deadenylated mRNAs are then degraded by two alternative mechanisms, namely exosome-mediated 3'-5' exonucleolytic degradation, or deadenylation-dependent mRNA decaping and subsequent 5'-3' exonucleolytic degradation by XRN1. May also be involved in post-transcriptional maturation of mRNA poly(A) tails. PAN3 acts as a positive regulator for PAN activity, recruiting the catalytic subunit PAN2 to mRNA via its interaction with RNA and with PAB1. The protein is PAN2-PAN3 deadenylation complex subunit PAN3 of Lodderomyces elongisporus (strain ATCC 11503 / CBS 2605 / JCM 1781 / NBRC 1676 / NRRL YB-4239) (Yeast).